A 354-amino-acid polypeptide reads, in one-letter code: Probable L-ascorbate-6-phosphate lactonase UlaG (354 aa).

This sequence belongs to the UlaG family. A divalent metal cation serves as cofactor.

The protein resides in the cytoplasm. The catalysed reaction is L-ascorbate 6-phosphate + H2O = 3-dehydro-L-gulonate 6-phosphate. Its pathway is cofactor degradation; L-ascorbate degradation; D-xylulose 5-phosphate from L-ascorbate: step 1/4. Probably catalyzes the hydrolysis of L-ascorbate-6-P into 3-keto-L-gulonate-6-P. Is essential for L-ascorbate utilization under anaerobic conditions. The protein is Probable L-ascorbate-6-phosphate lactonase UlaG of Escherichia coli O45:K1 (strain S88 / ExPEC).